The chain runs to 320 residues: MTLWNGVLPFYPQPRHAAGFSVPLLIVILVFLALAASFLLILPGIRGHSRWFWLVRVLLSLFIGAEIVAVHFSAEWFVGTVNTNTSYKAFSAARVTARVRLLVGLEGINITLTGTPVHQLNETIDYNEQFTWRLKENYAAEYANALEKGLPDPVLYLAEKFTPSSPCGLYHQYHLAGHYASATLWVAFCFWLLSNVLLSTPAPLYGGLALLTTGAFALFGVFALASISSVPLCPLRLGSSALTTQYGAAFWVTLATGVLCLFLGGAVVSLQYVRPSALRTLLDQSAKDCSQERGGSPLILGDPLHKQAALPDLKCITTNL.

Over 1 to 21 (MTLWNGVLPFYPQPRHAAGFS) the chain is Extracellular. A helical transmembrane segment spans residues 22-42 (VPLLIVILVFLALAASFLLIL). Topologically, residues 43–56 (PGIRGHSRWFWLVR) are cytoplasmic. A helical membrane pass occupies residues 57 to 77 (VLLSLFIGAEIVAVHFSAEWF). Residues 78 to 183 (VGTVNTNTSY…HLAGHYASAT (106 aa)) lie on the Extracellular side of the membrane. Residues asparagine 84, asparagine 109, and asparagine 121 are each glycosylated (N-linked (GlcNAc...) asparagine). A helical membrane pass occupies residues 184 to 204 (LWVAFCFWLLSNVLLSTPAPL). Topologically, residues 205–206 (YG) are cytoplasmic. A helical membrane pass occupies residues 207 to 227 (GLALLTTGAFALFGVFALASI). Topologically, residues 228-247 (SSVPLCPLRLGSSALTTQYG) are extracellular. The helical transmembrane segment at 248–268 (AAFWVTLATGVLCLFLGGAVV) threads the bilayer. At 269-320 (SLQYVRPSALRTLLDQSAKDCSQERGGSPLILGDPLHKQAALPDLKCITTNL) the chain is on the cytoplasmic side.

It belongs to the DUOXA family. Heterodimer with DUXA2; disulfide-linked. Interacts with CSNK1G2. N-glycosylated. As to expression, specifically expressed in thyroid. Also detected in salivary glands.

The protein resides in the endoplasmic reticulum membrane. Functionally, required for the maturation and the transport from the endoplasmic reticulum to the plasma membrane of functional DUOX2. May play a role in thyroid hormone synthesis. This is Dual oxidase maturation factor 2 (DUOXA2) from Homo sapiens (Human).